A 463-amino-acid chain; its full sequence is Cysteine--tRNA ligase (463 aa).

Cys-28 contacts Zn(2+). The 'HIGH' region motif lies at 30 to 40; the sequence is VTIYDLCHIGH. Residues Cys-209, His-234, and Glu-238 each contribute to the Zn(2+) site. Positions 266–270 match the 'KMSKS' region motif; it reads KMSKS. ATP is bound at residue Lys-269.

Belongs to the class-I aminoacyl-tRNA synthetase family. As to quaternary structure, monomer. Requires Zn(2+) as cofactor.

It localises to the cytoplasm. It carries out the reaction tRNA(Cys) + L-cysteine + ATP = L-cysteinyl-tRNA(Cys) + AMP + diphosphate. The chain is Cysteine--tRNA ligase from Tolumonas auensis (strain DSM 9187 / NBRC 110442 / TA 4).